Consider the following 404-residue polypeptide: MQQDMHNGGTGNTISNLSSALRQVNLGNSNTTTDQSNIAIDFNQQQLMEEVNQNSMNAFNIQQQHQQQQENVQKQQEQQQQQLQQQQQQQQQQQQQQQQQQQQQQQLQQQQQLQQHHHHQQRQQHPNNNVQAGTSQQQMLFQGANSIDSSRITKFFQNQPMEGYTLFSHRSAPNGFKVAIVLSELNMHYNTIFLDFNLGEHRAPEFVAINPNARVPALIDHNMDNLSIWESGAIILHVVNKYYRETGTPLLWSDNLADQAQINAWLFFQTSGHAPMIGQALHFRYFHSQKVKSAVDRYTDEVRRVYGVVEMALAERREALIMDLDSENAAAYSAGTTPLSQSRFFDYPVWLVGDKITVADLSFVPWNNVVDRIGINIKVEFPEVYKWTKHMMRRPAVIKALRGE.

Residues 110–134 (QQQLQQHHHHQQRQQHPNNNVQAGT) are disordered. Positions 162–246 (EGYTLFSHRS…HVVNKYYRET (85 aa)) constitute a GST N-terminal domain. One can recognise a GST C-terminal domain in the interval 255–404 (NLADQAQINA…PAVIKALRGE (150 aa)).

The protein belongs to the GST superfamily. In terms of assembly, homodimer.

In terms of biological role, plays an important role in the cellular response to the nitrogen source. URE2 gene plays a major part in the repression of GLN1 and GDH2 genes by glutamine, and is required for the inactivation of glutamine synthetase. URE2 gene product may catalytically inactivate GLN3 in response to an increase in the intracellular concentration of glutamine. In Kluyveromyces marxianus (Yeast), this protein is Protein URE2 (URE2).